Consider the following 237-residue polypeptide: NAD-dependent protein deacetylase (237 aa).

The Deacetylase sirtuin-type domain occupies 1 to 237 (MFTTSLRQAQ…LVETNRALQK (237 aa)). NAD(+)-binding residues include alanine 18, threonine 22, phenylalanine 29, arginine 30, glutamine 95, aspartate 98, and histidine 113. Phenylalanine 29 lines the nicotinamide pocket. Aspartate 98 is a nicotinamide binding site. The Proton acceptor role is filled by histidine 113. 4 residues coordinate Zn(2+): cysteine 121, cysteine 124, cysteine 140, and cysteine 142. Positions 180, 181, 205, and 224 each coordinate NAD(+).

This sequence belongs to the sirtuin family. Class U subfamily. The cofactor is Zn(2+).

The protein localises to the cytoplasm. It catalyses the reaction N(6)-acetyl-L-lysyl-[protein] + NAD(+) + H2O = 2''-O-acetyl-ADP-D-ribose + nicotinamide + L-lysyl-[protein]. In terms of biological role, NAD-dependent protein deacetylase which modulates the activities of several enzymes which are inactive in their acetylated form. In Shouchella clausii (strain KSM-K16) (Alkalihalobacillus clausii), this protein is NAD-dependent protein deacetylase.